The following is a 443-amino-acid chain: 23S rRNA (uracil(1939)-C(5))-methyltransferase RlmD (443 aa).

Residues 12–70 (SKQLSAKVSLQVTRLDHLGAGIAQHNGKVVFIPGVLPGEKAMVQLTEQKKRYSRAKLLN) enclose the TRAM domain. Residues Cys83, Cys89, Cys92, and Cys171 each coordinate [4Fe-4S] cluster. Positions 277, 306, 311, 327, 354, and 374 each coordinate S-adenosyl-L-methionine. Cys400 acts as the Nucleophile in catalysis.

The protein belongs to the class I-like SAM-binding methyltransferase superfamily. RNA M5U methyltransferase family. RlmD subfamily.

The catalysed reaction is uridine(1939) in 23S rRNA + S-adenosyl-L-methionine = 5-methyluridine(1939) in 23S rRNA + S-adenosyl-L-homocysteine + H(+). Its function is as follows. Catalyzes the formation of 5-methyl-uridine at position 1939 (m5U1939) in 23S rRNA. In Shewanella woodyi (strain ATCC 51908 / MS32), this protein is 23S rRNA (uracil(1939)-C(5))-methyltransferase RlmD.